The primary structure comprises 89 residues: Small ribosomal subunit protein uS15 (89 aa).

The protein belongs to the universal ribosomal protein uS15 family. In terms of assembly, part of the 30S ribosomal subunit. Forms a bridge to the 50S subunit in the 70S ribosome, contacting the 23S rRNA.

Its function is as follows. One of the primary rRNA binding proteins, it binds directly to 16S rRNA where it helps nucleate assembly of the platform of the 30S subunit by binding and bridging several RNA helices of the 16S rRNA. Forms an intersubunit bridge (bridge B4) with the 23S rRNA of the 50S subunit in the ribosome. This chain is Small ribosomal subunit protein uS15, found in Erwinia tasmaniensis (strain DSM 17950 / CFBP 7177 / CIP 109463 / NCPPB 4357 / Et1/99).